Reading from the N-terminus, the 434-residue chain is Evolutionarily conserved signaling intermediate in Toll pathway, mitochondrial (434 aa).

The N-terminal 48 residues, 1 to 48 (MSWVQVNLLARGLSRGWGSICRTVLSGTPFAQPSLQARGLHCSAVTHK), are a transit peptide targeting the mitochondrion. A Glycyl lysine isopeptide (Lys-Gly) (interchain with G-Cter in ubiquitin) cross-link involves residue lysine 371. Residues 403–434 (TRLEGQSPPHSPPKGPEEDDEAIQAQQRQGQS) form a disordered region.

It belongs to the ECSIT family. Interacts with MAP3K1, SMAD4 and TRAF6. Interacts with SMAD1 only after BMP4-treatment. Part of the mitochondrial complex I assembly/MCIA complex that comprises at least the core subunits TMEM126B, NDUFAF1, ECSIT and ACAD9 and complement subunits such as COA1 and TMEM186. Interacts with NDUFAF1. Interacts with ACAD9. Interacts with TRIM59. Interacts with TMEM70 and TMEM242. Interacts (when ubiquitinated) with NF-kappa-B subunits RELA and NFKB1. Interacts with RIGI, IFIT1 and MAVS; these interactions promote RLR-mediated type I IFN induction. Interacts with SQSTM1; this interaction inhibits TLR4 signaling via functional regulation of the TRAF6-ECSIT complex. Interacts with cereblon/CRBN; this interaction inhibits the ubiquitination of ECSIT. In terms of processing, ubiquitinated on Lys-371; leading to translocation in the nucleus together with RELA and NFKB1 and expression of NF-kappa-B-dependent genes.

Its subcellular location is the cytoplasm. The protein localises to the nucleus. It localises to the mitochondrion. Adapter protein that plays a role in different signaling pathways including TLRs and IL-1 pathways or innate antiviral induction signaling. Plays a role in the activation of NF-kappa-B by forming a signal complex with TRAF6 and TAK1/MAP3K7 to activate TAK1/MAP3K7 leading to activation of IKKs. Once ubiquitinated, interacts with the dissociated RELA and NFKB1 proteins and translocates to the nucleus where it induces NF-kappa-B-dependent gene expression. Plays a role in innate antiviral immune response by bridging the pattern recognition receptors RIGI and MDA5/IFIT1 to the MAVS complex at the mitochondrion. Promotes proteolytic activation of MAP3K1. Involved in the BMP signaling pathway. Required for normal embryonic development. In terms of biological role, as part of the MCIA complex, involved in the assembly of the mitochondrial complex I. This Rattus norvegicus (Rat) protein is Evolutionarily conserved signaling intermediate in Toll pathway, mitochondrial.